The following is a 111-amino-acid chain: Ig kappa chain V-III region PC 7769 (111 aa).

Positions 1-23 (DIVLTQSPASLAVSLGQRATISC) are framework-1. Cysteines 23 and 92 form a disulfide. Residues 24-38 (KASQSVDYDGDSYMN) are complementarity-determining-1. The framework-2 stretch occupies residues 39–53 (WYQQKPGQPPKVLIF). The segment at 54-60 (AASNLES) is complementarity-determining-2. The framework-3 stretch occupies residues 61–92 (GIPARFSGSGSGTDFTLNIHPVEEEDAATYYC). Positions 93-101 (QQSNEDPWT) are complementarity-determining-3. Residues 102-111 (FGSGTKLEIK) are framework-4.

This Mus musculus (Mouse) protein is Ig kappa chain V-III region PC 7769.